A 427-amino-acid polypeptide reads, in one-letter code: 3-phosphoshikimate 1-carboxyvinyltransferase (427 aa).

The 3-phosphoshikimate site is built by lysine 22, serine 23, and arginine 27. Position 22 (lysine 22) interacts with phosphoenolpyruvate. Positions 96 and 124 each coordinate phosphoenolpyruvate. 3-phosphoshikimate is bound by residues serine 169, serine 170, glutamine 171, serine 197, aspartate 313, asparagine 336, and lysine 340. Glutamine 171 contributes to the phosphoenolpyruvate binding site. Aspartate 313 (proton acceptor) is an active-site residue. 3 residues coordinate phosphoenolpyruvate: arginine 344, arginine 386, and lysine 411.

This sequence belongs to the EPSP synthase family. Monomer.

It is found in the cytoplasm. It carries out the reaction 3-phosphoshikimate + phosphoenolpyruvate = 5-O-(1-carboxyvinyl)-3-phosphoshikimate + phosphate. It participates in metabolic intermediate biosynthesis; chorismate biosynthesis; chorismate from D-erythrose 4-phosphate and phosphoenolpyruvate: step 6/7. Its function is as follows. Catalyzes the transfer of the enolpyruvyl moiety of phosphoenolpyruvate (PEP) to the 5-hydroxyl of shikimate-3-phosphate (S3P) to produce enolpyruvyl shikimate-3-phosphate and inorganic phosphate. This is 3-phosphoshikimate 1-carboxyvinyltransferase from Salmonella dublin (strain CT_02021853).